The primary structure comprises 170 residues: Ureidoglycolate lyase (170 aa).

It belongs to the ureidoglycolate lyase family. Homodimer. Ni(2+) is required as a cofactor.

It carries out the reaction (S)-ureidoglycolate = urea + glyoxylate. It participates in nitrogen metabolism; (S)-allantoin degradation. Its function is as follows. Catalyzes the catabolism of the allantoin degradation intermediate (S)-ureidoglycolate, generating urea and glyoxylate. Involved in the utilization of allantoin as nitrogen source. The protein is Ureidoglycolate lyase of Stutzerimonas stutzeri (strain A1501) (Pseudomonas stutzeri).